The sequence spans 252 residues: MRILVSNDDGYNAPGLEALVEALSDLGELTVVAPETNHSGASNSLTLNRPLSVRQAANGFLYVNGTPTDCVHVALTGLMDTRPDLVVSGINNGANLGDDTLYSGTVAAASEAHLFGIPAIAFSLVDKGWEHLESAARAARRIVERQIAAPLGVPALLNVNIPNRRYEDLRGVRVTRLGKRHPAEPVVRTTTPYGDTVYWIGPVGLAADATPGTDFHAIADGAVSLTPLRLDLTQYAQLEQLGQWADPLCANL.

4 residues coordinate a divalent metal cation: Asp-8, Asp-9, Ser-39, and Asn-91.

The protein belongs to the SurE nucleotidase family. Requires a divalent metal cation as cofactor.

Its subcellular location is the cytoplasm. The catalysed reaction is a ribonucleoside 5'-phosphate + H2O = a ribonucleoside + phosphate. Its function is as follows. Nucleotidase that shows phosphatase activity on nucleoside 5'-monophosphates. The polypeptide is 5'-nucleotidase SurE (Bordetella avium (strain 197N)).